We begin with the raw amino-acid sequence, 285 residues long: Dermonecrotic toxin LlSicTox-alphaIII2 (285 aa).

The active site involves His-12. Glu-32 and Asp-34 together coordinate Mg(2+). His-47 (nucleophile) is an active-site residue. Cys-51 and Cys-57 form a disulfide bridge. Asp-91 lines the Mg(2+) pocket.

It belongs to the arthropod phospholipase D family. Class I subfamily. The cofactor is Mg(2+). In terms of tissue distribution, expressed by the venom gland.

Its subcellular location is the secreted. The enzyme catalyses an N-(acyl)-sphingosylphosphocholine = an N-(acyl)-sphingosyl-1,3-cyclic phosphate + choline. The catalysed reaction is an N-(acyl)-sphingosylphosphoethanolamine = an N-(acyl)-sphingosyl-1,3-cyclic phosphate + ethanolamine. It catalyses the reaction a 1-acyl-sn-glycero-3-phosphocholine = a 1-acyl-sn-glycero-2,3-cyclic phosphate + choline. It carries out the reaction a 1-acyl-sn-glycero-3-phosphoethanolamine = a 1-acyl-sn-glycero-2,3-cyclic phosphate + ethanolamine. Dermonecrotic toxins cleave the phosphodiester linkage between the phosphate and headgroup of certain phospholipids (sphingolipid and lysolipid substrates), forming an alcohol (often choline) and a cyclic phosphate. This toxin acts on sphingomyelin (SM) (228.2 U/mg). It may also act on ceramide phosphoethanolamine (CPE), lysophosphatidylcholine (LPC) and lysophosphatidylethanolamine (LPE), but not on lysophosphatidylserine (LPS), and lysophosphatidylglycerol (LPG). It acts by transphosphatidylation, releasing exclusively cyclic phosphate products as second products. Induces dermonecrosis, hemolysis, increased vascular permeability, edema, inflammatory response, and platelet aggregation. Is lethal to mice. The sequence is that of Dermonecrotic toxin LlSicTox-alphaIII2 from Loxosceles laeta (South American recluse spider).